Here is a 488-residue protein sequence, read N- to C-terminus: Alpha-ketoglutaric semialdehyde dehydrogenase (488 aa).

Residues K180 and 233–238 (GSNQVG) contribute to the NAD(+) site. The Proton acceptor role is filled by E255. The active-site Nucleophile is C289. 2 residues coordinate NAD(+): Q336 and E390.

This sequence belongs to the aldehyde dehydrogenase family. As to quaternary structure, homotetramer.

The catalysed reaction is 2,5-dioxopentanoate + NADP(+) + H2O = 2-oxoglutarate + NADPH + 2 H(+). It catalyses the reaction 2,5-dioxopentanoate + NAD(+) + H2O = 2-oxoglutarate + NADH + 2 H(+). Catalyzes the NAD(P)(+)-dependent oxidation of alpha-ketoglutaric semialdehyde (alphaKGSA) to alpha-ketoglutarate. Prefers NADP(+) to NAD(+) as a cosubstrate. In vitro, can also use various aldehydes. This Bacillus subtilis (strain 168) protein is Alpha-ketoglutaric semialdehyde dehydrogenase.